The chain runs to 602 residues: Cholinesterase (602 aa).

An N-terminal signal peptide occupies residues 1–28 (MQSKGTIISIQFLLRFLLLWVLIGKSHT). A glycan (N-linked (GlcNAc...) asparagine) is linked at Asn-85. An intrachain disulfide couples Cys-93 to Cys-120. The N-linked (GlcNAc...) asparagine glycan is linked to Asn-134. A substrate-binding site is contributed by 144-145 (GG). The active-site Acyl-ester intermediate is the Ser-226. Ser-226 bears the Phosphoserine mark. N-linked (GlcNAc...) asparagine glycosylation is found at Asn-269 and Asn-284. Residues Cys-280 and Cys-291 are joined by a disulfide bond. Glu-353 functions as the Charge relay system in the catalytic mechanism. Asn-369 is a glycosylation site (N-linked (GlcNAc...) asparagine). A disulfide bond links Cys-428 and Cys-547. His-466 functions as the Charge relay system in the catalytic mechanism. N-linked (GlcNAc...) asparagine glycans are attached at residues Asn-483, Asn-509, Asn-513, and Asn-514.

It belongs to the type-B carboxylesterase/lipase family. Homotetramer; disulfide-linked. Dimer of dimers.

The protein resides in the secreted. The catalysed reaction is an acylcholine + H2O = a carboxylate + choline + H(+). Esterase with broad substrate specificity. Contributes to the inactivation of the neurotransmitter acetylcholine. Can degrade neurotoxic organophosphate esters. In Felis catus (Cat), this protein is Cholinesterase (BCHE).